We begin with the raw amino-acid sequence, 330 residues long: Ketol-acid reductoisomerase (NADP(+)) (330 aa).

The region spanning 3 to 184 is the KARI N-terminal Rossmann domain; the sequence is LSVYYDKDID…GGGRMGVLET (182 aa). Residues 26–29, S52, and S54 each bind NADP(+); that span reads YGTQ. The active site involves H109. NADP(+) is bound at residue G135. A KARI C-terminal knotted domain is found at 185 to 329; that stretch reads SFKEECESDL…EILRTPFNHE (145 aa). D193, E197, E229, and E233 together coordinate Mg(2+). S254 is a substrate binding site.

Belongs to the ketol-acid reductoisomerase family. It depends on Mg(2+) as a cofactor.

The catalysed reaction is (2R)-2,3-dihydroxy-3-methylbutanoate + NADP(+) = (2S)-2-acetolactate + NADPH + H(+). It carries out the reaction (2R,3R)-2,3-dihydroxy-3-methylpentanoate + NADP(+) = (S)-2-ethyl-2-hydroxy-3-oxobutanoate + NADPH + H(+). Its pathway is amino-acid biosynthesis; L-isoleucine biosynthesis; L-isoleucine from 2-oxobutanoate: step 2/4. It participates in amino-acid biosynthesis; L-valine biosynthesis; L-valine from pyruvate: step 2/4. In terms of biological role, involved in the biosynthesis of branched-chain amino acids (BCAA). Catalyzes an alkyl-migration followed by a ketol-acid reduction of (S)-2-acetolactate (S2AL) to yield (R)-2,3-dihydroxy-isovalerate. In the isomerase reaction, S2AL is rearranged via a Mg-dependent methyl migration to produce 3-hydroxy-3-methyl-2-ketobutyrate (HMKB). In the reductase reaction, this 2-ketoacid undergoes a metal-dependent reduction by NADPH to yield (R)-2,3-dihydroxy-isovalerate. This chain is Ketol-acid reductoisomerase (NADP(+)), found in Helicobacter acinonychis (strain Sheeba).